A 175-amino-acid polypeptide reads, in one-letter code: Large ribosomal subunit protein uL10 (175 aa).

This sequence belongs to the universal ribosomal protein uL10 family. Part of the ribosomal stalk of the 50S ribosomal subunit. The N-terminus interacts with L11 and the large rRNA to form the base of the stalk. The C-terminus forms an elongated spine to which L12 dimers bind in a sequential fashion forming a multimeric L10(L12)X complex.

Forms part of the ribosomal stalk, playing a central role in the interaction of the ribosome with GTP-bound translation factors. This is Large ribosomal subunit protein uL10 from Mycolicibacterium smegmatis (strain ATCC 700084 / mc(2)155) (Mycobacterium smegmatis).